The sequence spans 212 residues: Pyridoxine/pyridoxamine 5'-phosphate oxidase (212 aa).

Residues 9-12 (RKSY) and lysine 67 each bind substrate. FMN contacts are provided by residues 62–67 (RIVLIK), 77–78 (FT), arginine 83, and lysine 84. Positions 124, 128, and 132 each coordinate substrate. Residues 141-142 (QS) and tryptophan 185 each bind FMN. 191–193 (RLH) lines the substrate pocket. Arginine 195 lines the FMN pocket.

This sequence belongs to the pyridoxamine 5'-phosphate oxidase family. Homodimer. The cofactor is FMN.

The enzyme catalyses pyridoxamine 5'-phosphate + O2 + H2O = pyridoxal 5'-phosphate + H2O2 + NH4(+). It carries out the reaction pyridoxine 5'-phosphate + O2 = pyridoxal 5'-phosphate + H2O2. It functions in the pathway cofactor metabolism; pyridoxal 5'-phosphate salvage; pyridoxal 5'-phosphate from pyridoxamine 5'-phosphate: step 1/1. It participates in cofactor metabolism; pyridoxal 5'-phosphate salvage; pyridoxal 5'-phosphate from pyridoxine 5'-phosphate: step 1/1. In terms of biological role, catalyzes the oxidation of either pyridoxine 5'-phosphate (PNP) or pyridoxamine 5'-phosphate (PMP) into pyridoxal 5'-phosphate (PLP). This Verminephrobacter eiseniae (strain EF01-2) protein is Pyridoxine/pyridoxamine 5'-phosphate oxidase.